The primary structure comprises 262 residues: MTQGAQRLVSMRALLESGAHFGHQTKRWNPKMRPYIFTARNGIHIIDLQKTITGLTEAYQFIVETVAAGQKVLFVGTKKQAQETIAEEATRAGQFYVTQRWLGGTLTNFATMRKRLRYLNDLEDQRARGEFNKLTKAEALKLDAEIEKLNKVFGGMKTMDRLPGALFIVDPHKEALAVKEANKTGIPVVAMVDTNCDPDLIDYVIPCNDDAIRSIRLIAAKIADAAIEGQNRRESLQADVHGAGYEQEMTAQLIAREAEAVE.

This sequence belongs to the universal ribosomal protein uS2 family.

The chain is Small ribosomal subunit protein uS2 from Roseiflexus sp. (strain RS-1).